The sequence spans 46 residues: Phospholipase A2 superbin c (46 aa).

Positions 28, 30, and 32 each coordinate Ca(2+). Cysteine 29 and cysteine 45 are oxidised to a cystine.

Ca(2+) is required as a cofactor. In terms of tissue distribution, expressed by the venom gland.

It localises to the secreted. It catalyses the reaction a 1,2-diacyl-sn-glycero-3-phosphocholine + H2O = a 1-acyl-sn-glycero-3-phosphocholine + a fatty acid + H(+). Its function is as follows. Snake venom phospholipase A2 (PLA2) that inhibits collagen-induced platelet aggregation. In terms of inhibition of platelet aggregation, superbin c is more potent as superbin d. PLA2 catalyzes the calcium-dependent hydrolysis of the 2-acyl groups in 3-sn-phosphoglycerides. The sequence is that of Phospholipase A2 superbin c from Austrelaps superbus (Lowland copperhead snake).